We begin with the raw amino-acid sequence, 335 residues long: uncharacterized protein (335 aa).

This is an uncharacterized protein from Methanocaldococcus jannaschii (strain ATCC 43067 / DSM 2661 / JAL-1 / JCM 10045 / NBRC 100440) (Methanococcus jannaschii).